A 792-amino-acid chain; its full sequence is Phosphoenolpyruvate synthase (792 aa).

Residue His-421 is the Tele-phosphohistidine intermediate of the active site. Positions 511, 578, 680, 701, 702, 703, and 704 each coordinate substrate. Glu-680 is a Mg(2+) binding site. Asp-704 lines the Mg(2+) pocket. The Proton donor role is filled by Cys-751.

The protein belongs to the PEP-utilizing enzyme family. As to quaternary structure, homodimer. Mg(2+) serves as cofactor.

It carries out the reaction pyruvate + ATP + H2O = phosphoenolpyruvate + AMP + phosphate + 2 H(+). It functions in the pathway carbohydrate biosynthesis; gluconeogenesis. Its activity is regulated as follows. Activated by a Pi-dependent pyrophosphorylation and inactivated by an ADP-dependent phosphorylation on a regulatory threonine. Both reactions are mediated by the bifunctional serine/threonine kinase and phosphorylase PpsR. Catalyzes the phosphorylation of pyruvate to phosphoenolpyruvate. In Escherichia coli (strain K12), this protein is Phosphoenolpyruvate synthase (ppsA).